We begin with the raw amino-acid sequence, 130 residues long: Small ribosomal subunit protein uS4 (130 aa).

Residue K64 is modified to N6-acetyllysine. K91 is covalently cross-linked (Glycyl lysine isopeptide (Lys-Gly) (interchain with G-Cter in SUMO2)). One can recognise an S4 RNA-binding domain in the interval 106 to 130 (RRLQTQVFKLGLAXSIHHXRVLIRQ). K114 bears the N6-acetyllysine mark.

The protein belongs to the universal ribosomal protein uS4 family. In terms of assembly, component of the small ribosomal subunit. Identified in a IGF2BP1-dependent mRNP granule complex containing untranslated mRNAs. Part of the small subunit (SSU) processome, composed of more than 70 proteins and the RNA chaperone small nucleolar RNA (snoRNA) U3.

It is found in the cytoplasm. Its subcellular location is the nucleus. The protein resides in the nucleolus. Component of the small ribosomal subunit. The ribosome is a large ribonucleoprotein complex responsible for the synthesis of proteins in the cell. Part of the small subunit (SSU) processome, first precursor of the small eukaryotic ribosomal subunit. During the assembly of the SSU processome in the nucleolus, many ribosome biogenesis factors, an RNA chaperone and ribosomal proteins associate with the nascent pre-rRNA and work in concert to generate RNA folding, modifications, rearrangements and cleavage as well as targeted degradation of pre-ribosomal RNA by the RNA exosome. The sequence is that of Small ribosomal subunit protein uS4 (RPS9) from Sus scrofa (Pig).